Here is a 1057-residue protein sequence, read N- to C-terminus: Nuclear RNAi defective-3 protein (1057 aa).

Disordered regions lie at residues 1–89 (MDLL…GLSV) and 344–388 (LTNS…ERTV). Residues 17 to 30 (STAKKPATSASSTP) are compositionally biased toward low complexity. 2 stretches are compositionally biased toward basic and acidic residues: residues 67–81 (PKRE…DPKR) and 356–388 (GGRE…ERTV). Positions 387-500 (TVSHYQRQFQ…YPMELMSILP (114 aa)) constitute a PAZ domain. The Piwi domain occupies 677–1001 (GIIAEKRPDM…LAKRGHNNYK (325 aa)).

It is found in the cytoplasm. It localises to the nucleus. Functionally, transports small interfering RNAs (siRNAs) from the cytoplasm to the nucleus. Required for RNA interference (RNAi) in nuclei. Required for exogenous RNAi-induced H3K27 methylation. In Caenorhabditis elegans, this protein is Nuclear RNAi defective-3 protein (nrde-3).